The primary structure comprises 167 residues: Anaerobic nitrite reductase NSHB4 (167 aa).

A Globin domain is found at 12–162 (RFTEEQEALV…LVAAIKEGMK (151 aa)). The Homodimerization signature appears at 45–49 (EVAPS). Ser55, His73, Arg103, Thr107, and His108 together coordinate heme b. Residues 115–127 (DTHFEVARFALLE) carry the Homodimerization motif.

The protein belongs to the plant globin family. Homodimer. Requires heme b as cofactor.

The protein localises to the cytoplasm. The protein resides in the nucleus. The enzyme catalyses Fe(III)-heme b-[protein] + nitric oxide + H2O = Fe(II)-heme b-[protein] + nitrite + 2 H(+). Phytoglobin that reduces nitrite to nitric oxide under anoxic conditions (e.g. during flooding or in waterlogged soil). May not function as an oxygen storage or transport protein. Has an unusually high affinity for O(2) through an hexacoordinate heme iron because of a very low dissociation constant. The sequence is that of Anaerobic nitrite reductase NSHB4 from Oryza sativa subsp. indica (Rice).